A 216-amino-acid chain; its full sequence is GTP:AMP phosphotransferase, mitochondrial (216 aa).

Residue 15–20 coordinates GTP; that stretch reads GSGKGT. The interval 35 to 64 is NMPbind; it reads STGDILRQNIIKNTELGKKAKQYIAEGKLV. Residues Thr-36, Arg-41, 62-64, 89-92, and Gln-96 contribute to the AMP site; these read KLV and GFPR. An LID region spans residues 125–162; it reads NRWIHAPSGRVYNIGFKNPKVPGKDDVTGEPLMQREDD. GTP contacts are provided by residues Arg-126 and 135–136; that span reads VY. AMP-binding residues include Arg-159 and Arg-170. Thr-199 provides a ligand contact to GTP.

The protein belongs to the adenylate kinase family. AK3 subfamily. Monomer. In terms of tissue distribution, ubiquitously expressed with highest levels expressed in the abdomen, suggesting a function in muscle tissues.

It is found in the mitochondrion matrix. The catalysed reaction is a ribonucleoside 5'-triphosphate + AMP = a ribonucleoside 5'-diphosphate + ADP. Involved in maintaining the homeostasis of cellular nucleotides by catalyzing the interconversion of nucleoside phosphates. Has GTP:AMP phosphotransferase and ITP:AMP phosphotransferase activities. The polypeptide is GTP:AMP phosphotransferase, mitochondrial (Drosophila melanogaster (Fruit fly)).